Reading from the N-terminus, the 27-residue chain is GLASFLGKALKAGLKIGAHLLGGAPQQ.

Expressed by the skin glands.

It is found in the secreted. Antimicrobial peptide. The polypeptide is Caerulein precursor fragment R7 (Xenopus ruwenzoriensis (Uganda clawed frog)).